Consider the following 396-residue polypeptide: Flavohemoprotein (396 aa).

In terms of domain architecture, Globin spans 1 to 136 (MLDNHTIAIV…LANVFIQRED (136 aa)). A heme b-binding site is contributed by His-85. Residues Tyr-95 and Glu-135 each act as charge relay system in the active site. A reductase region spans residues 147–396 (GGWSGVRPFR…YECFGPHKVV (250 aa)). The FAD-binding FR-type domain occupies 150–255 (SGVRPFRIVN…AAPHGDFFLD (106 aa)). FAD-binding positions include Tyr-188 and 204-207 (RQYS). Residue 268-273 (GVGQTP) participates in NADP(+) binding. 389–392 (CFGP) contacts FAD.

The protein belongs to the globin family. Two-domain flavohemoproteins subfamily. This sequence in the C-terminal section; belongs to the flavoprotein pyridine nucleotide cytochrome reductase family. Heme b serves as cofactor. It depends on FAD as a cofactor.

It catalyses the reaction 2 nitric oxide + NADPH + 2 O2 = 2 nitrate + NADP(+) + H(+). It carries out the reaction 2 nitric oxide + NADH + 2 O2 = 2 nitrate + NAD(+) + H(+). Its function is as follows. Is involved in NO detoxification in an aerobic process, termed nitric oxide dioxygenase (NOD) reaction that utilizes O(2) and NAD(P)H to convert NO to nitrate, which protects the bacterium from various noxious nitrogen compounds. Therefore, plays a central role in the inducible response to nitrosative stress. This is Flavohemoprotein from Pectobacterium atrosepticum (strain SCRI 1043 / ATCC BAA-672) (Erwinia carotovora subsp. atroseptica).